Consider the following 328-residue polypeptide: POU domain, class 5, transcription factor 2 (328 aa).

The tract at residues 1-25 is disordered; the sequence is MAGHRPSNHFCPLPGSGGGGPRGPM. The POU-specific domain maps to 118 to 192; the sequence is DISGILKELQ…LLKKWLKEVE (75 aa). The segment at residues 210 to 269 is a DNA-binding region (homeobox); that stretch reads GKWRRASRERRIGNSLEKFFQRCPKPTPQQISHIAGCLQLQKDVVRVWFYNRSKMGSRPT.

The protein belongs to the POU transcription factor family. Class-5 subfamily. As to expression, expressed in skeletal and cardiac muscles, brain, heart and lung. Little or no detectable expression found in pancreas, kidney, liver or placenta.

Its subcellular location is the nucleus. In terms of biological role, transcription factor that binds preferentially to the octamer motif (5'-ATGTTAAT-3'). May exert a regulatory function in meiotic events that are required for terminal differentiation of male germ cell. The sequence is that of POU domain, class 5, transcription factor 2 (POU5F2) from Homo sapiens (Human).